A 97-amino-acid chain; its full sequence is Meromycolate extension acyl carrier protein (97 aa).

In terms of domain architecture, Carrier spans 3–81 (ASQQEIIAGL…DVVAYIQKLE (79 aa)). Ser-41 carries the post-translational modification O-(pantetheine 4'-phosphoryl)serine.

It belongs to the acyl carrier protein (ACP) family. In terms of processing, 4'-phosphopantetheine is transferred from CoA to a specific serine of apo-AcpM.

It is found in the cytoplasm. Functionally, acyl carrier protein involved in meromycolate extension. This is Meromycolate extension acyl carrier protein (acpM) from Mycolicibacterium aurum (Mycobacterium aurum).